The sequence spans 319 residues: tRNA(Ile)-lysidine synthase (319 aa).

ATP is bound at residue 32 to 37 (SGGSDS).

The protein belongs to the tRNA(Ile)-lysidine synthase family.

It is found in the cytoplasm. It catalyses the reaction cytidine(34) in tRNA(Ile2) + L-lysine + ATP = lysidine(34) in tRNA(Ile2) + AMP + diphosphate + H(+). In terms of biological role, ligates lysine onto the cytidine present at position 34 of the AUA codon-specific tRNA(Ile) that contains the anticodon CAU, in an ATP-dependent manner. Cytidine is converted to lysidine, thus changing the amino acid specificity of the tRNA from methionine to isoleucine. This chain is tRNA(Ile)-lysidine synthase, found in Chlamydia pneumoniae (Chlamydophila pneumoniae).